The primary structure comprises 213 residues: Putative thiamine-phosphate synthase (213 aa).

4-amino-2-methyl-5-(diphosphooxymethyl)pyrimidine contacts are provided by residues 38-42 (QLREK) and Asn70. A Mg(2+)-binding site is contributed by Asp71. Residue Ser109 coordinates 4-amino-2-methyl-5-(diphosphooxymethyl)pyrimidine. A 2-[(2R,5Z)-2-carboxy-4-methylthiazol-5(2H)-ylidene]ethyl phosphate-binding site is contributed by 135-137 (TPS). Residue Lys138 participates in 4-amino-2-methyl-5-(diphosphooxymethyl)pyrimidine binding. 2-[(2R,5Z)-2-carboxy-4-methylthiazol-5(2H)-ylidene]ethyl phosphate contacts are provided by residues Gly166 and 186 to 187 (IS).

This sequence belongs to the thiamine-phosphate synthase family. Requires Mg(2+) as cofactor.

It carries out the reaction 2-[(2R,5Z)-2-carboxy-4-methylthiazol-5(2H)-ylidene]ethyl phosphate + 4-amino-2-methyl-5-(diphosphooxymethyl)pyrimidine + 2 H(+) = thiamine phosphate + CO2 + diphosphate. The enzyme catalyses 2-(2-carboxy-4-methylthiazol-5-yl)ethyl phosphate + 4-amino-2-methyl-5-(diphosphooxymethyl)pyrimidine + 2 H(+) = thiamine phosphate + CO2 + diphosphate. The catalysed reaction is 4-methyl-5-(2-phosphooxyethyl)-thiazole + 4-amino-2-methyl-5-(diphosphooxymethyl)pyrimidine + H(+) = thiamine phosphate + diphosphate. It functions in the pathway cofactor biosynthesis; thiamine diphosphate biosynthesis; thiamine phosphate from 4-amino-2-methyl-5-diphosphomethylpyrimidine and 4-methyl-5-(2-phosphoethyl)-thiazole: step 1/1. Its function is as follows. Condenses 4-methyl-5-(beta-hydroxyethyl)thiazole monophosphate (THZ-P) and 2-methyl-4-amino-5-hydroxymethyl pyrimidine pyrophosphate (HMP-PP) to form thiamine monophosphate (TMP). The sequence is that of Putative thiamine-phosphate synthase (thiE) from Geobacter sulfurreducens (strain ATCC 51573 / DSM 12127 / PCA).